The following is a 245-amino-acid chain: Folate receptor gamma (245 aa).

A signal peptide spans 1 to 22 (MDMAWQMMQLLLLALVTAAGSA). Cystine bridges form between cysteine 37–cysteine 65, cysteine 57–cysteine 105, cysteine 66–cysteine 109, cysteine 89–cysteine 175, cysteine 96–cysteine 146, cysteine 135–cysteine 209, cysteine 139–cysteine 189, and cysteine 152–cysteine 169. Residues aspartate 103 and tyrosine 107 each contribute to the folate site. An N-linked (GlcNAc...) asparagine glycan is attached at asparagine 121. Folate is bound by residues 124 to 128 (WRKER), 157 to 162 (HKGWNW), and serine 196. The N-linked (GlcNAc...) asparagine glycan is linked to asparagine 161. The N-linked (GlcNAc...) asparagine glycan is linked to asparagine 201.

The protein belongs to the folate receptor family. Spleen, thymus, bone marrow, ovarian carcinoma, and uterine carcinoma.

Its subcellular location is the secreted. Functionally, binds to folate and reduced folic acid derivatives and mediates delivery of 5-methyltetrahydrofolate to the interior of cells. Isoform Short does not bind folate. This chain is Folate receptor gamma (FOLR3), found in Homo sapiens (Human).